A 288-amino-acid chain; its full sequence is Fibroblast growth factor 2 (288 aa).

A propeptide spanning residues 1–142 (MVGVGGGDVE…TMAAGSITTL (142 aa)) is cleaved from the precursor. Residues 1–156 (MVGVGGGDVE…EDGGSGAFPP (156 aa)) are disordered. Positions 72–84 (ERPSGSRLGDHGR) are enriched in basic and acidic residues. Residues Arg-108, Arg-110, and Arg-112 each carry the omega-N-methylarginine; alternate modification. Symmetric dimethylarginine; alternate is present on residues Arg-108, Arg-110, and Arg-112. Positions 113–132 (GTAAPRAAPAARGSRPGPAG) are enriched in low complexity. Residue Asn-169 participates in heparin binding. The Cell attachment site; atypical motif lies at 179–181 (DGR). Tyr-215 carries the post-translational modification Phosphotyrosine; by TEC. Residues 221-223 (DGR) carry the Cell attachment site; atypical motif. Residue Lys-228 forms a Glycyl lysine isopeptide (Lys-Gly) (interchain with G-Cter in SUMO1) linkage. The segment at 261–277 (KRTGQYKLGSKTGPGQK) is heparin-binding.

It belongs to the heparin-binding growth factors family. As to quaternary structure, monomer. Homodimer. Interacts with FGFR1, FGFR2, FGFR3 and FGFR4. Affinity between fibroblast growth factors (FGFs) and their receptors is increased by heparan sulfate glycosaminoglycans that function as coreceptors. Interacts with CSPG4, FGFBP1 and TEC. Found in a complex with FGFBP1, FGF1 and FGF2. Interacts with FGFBP3. Interacts with integrin ITGAV:ITGB3; the interaction is required for FGF2 signaling. Interacts with SNORC (via the extracellular domain). Interacts with glypican GPC3. Post-translationally, phosphorylation at Tyr-215 regulates FGF2 unconventional secretion.

The protein localises to the secreted. It localises to the nucleus. In terms of biological role, acts as a ligand for FGFR1, FGFR2, FGFR3 and FGFR4. Also acts as an integrin ligand which is required for FGF2 signaling. Binds to integrin ITGAV:ITGB3. Plays an important role in the regulation of cell survival, cell division, cell differentiation and cell migration. Functions as a potent mitogen in vitro. Can induce angiogenesis. Mediates phosphorylation of ERK1/2 and thereby promotes retinal lens fiber differentiation. The chain is Fibroblast growth factor 2 from Pan troglodytes (Chimpanzee).